The chain runs to 180 residues: ATP-dependent protease subunit HslV (180 aa).

The active site involves Thr-6. Residues Gly-162, Cys-165, and Thr-168 each coordinate Na(+).

The protein belongs to the peptidase T1B family. HslV subfamily. In terms of assembly, a double ring-shaped homohexamer of HslV is capped on each side by a ring-shaped HslU homohexamer. The assembly of the HslU/HslV complex is dependent on binding of ATP.

Its subcellular location is the cytoplasm. The catalysed reaction is ATP-dependent cleavage of peptide bonds with broad specificity.. Allosterically activated by HslU binding. In terms of biological role, protease subunit of a proteasome-like degradation complex believed to be a general protein degrading machinery. This Oleidesulfovibrio alaskensis (strain ATCC BAA-1058 / DSM 17464 / G20) (Desulfovibrio alaskensis) protein is ATP-dependent protease subunit HslV.